Here is a 142-residue protein sequence, read N- to C-terminus: Ribosome-binding factor A (142 aa).

The segment at 118-142 (DKNGDAEVDDTQVDDEPSVDSEKGE) is disordered. Residues 123–136 (AEVDDTQVDDEPSV) are compositionally biased toward acidic residues.

This sequence belongs to the RbfA family. Monomer. Binds 30S ribosomal subunits, but not 50S ribosomal subunits or 70S ribosomes.

It localises to the cytoplasm. One of several proteins that assist in the late maturation steps of the functional core of the 30S ribosomal subunit. Associates with free 30S ribosomal subunits (but not with 30S subunits that are part of 70S ribosomes or polysomes). Required for efficient processing of 16S rRNA. May interact with the 5'-terminal helix region of 16S rRNA. The chain is Ribosome-binding factor A from Colwellia psychrerythraea (strain 34H / ATCC BAA-681) (Vibrio psychroerythus).